Reading from the N-terminus, the 125-residue chain is Large ribosomal subunit protein bL19 (125 aa).

This sequence belongs to the bacterial ribosomal protein bL19 family.

Functionally, this protein is located at the 30S-50S ribosomal subunit interface and may play a role in the structure and function of the aminoacyl-tRNA binding site. The protein is Large ribosomal subunit protein bL19 of Wolbachia pipientis subsp. Culex pipiens (strain wPip).